The following is a 278-amino-acid chain: Ribonuclease HII (278 aa).

The RNase H type-2 domain maps to 71–259 (WPVAGCDEAG…VAAAWDKHAP (189 aa)). The a divalent metal cation site is built by Asp-77, Glu-78, and Asp-168.

The protein belongs to the RNase HII family. Requires Mn(2+) as cofactor. The cofactor is Mg(2+).

Its subcellular location is the cytoplasm. The enzyme catalyses Endonucleolytic cleavage to 5'-phosphomonoester.. In terms of biological role, endonuclease that specifically degrades the RNA of RNA-DNA hybrids. This Rhodopseudomonas palustris (strain BisA53) protein is Ribonuclease HII.